We begin with the raw amino-acid sequence, 141 residues long: Hemoglobin subunit alpha (141 aa).

Residues 1-141 enclose the Globin domain; sequence VLSSKDKANI…VSTVLTSKYR (141 aa). Phosphoserine is present on serine 3. N6-succinyllysine is present on residues lysine 7 and lysine 11. Lysine 16 is subject to N6-acetyllysine; alternate. Lysine 16 is modified (N6-succinyllysine; alternate). At tyrosine 24 the chain carries Phosphotyrosine. N6-succinyllysine is present on lysine 40. Serine 49 bears the Phosphoserine mark. Position 58 (histidine 58) interacts with O2. Histidine 87 serves as a coordination point for heme b. Phosphoserine is present on serine 102. Residue threonine 108 is modified to Phosphothreonine. At serine 124 the chain carries Phosphoserine. Phosphothreonine is present on residues threonine 134 and threonine 137. Serine 138 carries the post-translational modification Phosphoserine.

It belongs to the globin family. Heterotetramer of two alpha chains and two beta chains. As to expression, red blood cells.

Involved in oxygen transport from the lung to the various peripheral tissues. Functionally, hemopressin acts as an antagonist peptide of the cannabinoid receptor CNR1. Hemopressin-binding efficiently blocks cannabinoid receptor CNR1 and subsequent signaling. The polypeptide is Hemoglobin subunit alpha (HBA) (Vicugna pacos (Alpaca)).